The following is a 120-amino-acid chain: Cell division protein FtsL (120 aa).

The tract at residues 1–22 is disordered; the sequence is MSNVAYKSNLEPNRVHREAEQP. Residues 1–37 are Cytoplasmic-facing; it reads MSNVAYKSNLEPNRVHREAEQPKKQILKRGQMTLGEK. Residues 13-22 show a composition bias toward basic and acidic residues; it reads NRVHREAEQP. Residues 38 to 58 form a helical membrane-spanning segment; that stretch reads VIITIALAIVLVVAFRIISVQ. At 59–120 the chain is on the extracellular side; that stretch reads AQIYTVNQEI…GDNVKVVDGQ (62 aa).

It belongs to the FtsL family.

The protein localises to the cell membrane. In terms of biological role, essential cell division protein. This Listeria monocytogenes serovar 1/2a (strain ATCC BAA-679 / EGD-e) protein is Cell division protein FtsL.